A 678-amino-acid chain; its full sequence is DNA mismatch repair protein MutL (678 aa).

Belongs to the DNA mismatch repair MutL/HexB family.

In terms of biological role, this protein is involved in the repair of mismatches in DNA. It is required for dam-dependent methyl-directed DNA mismatch repair. May act as a 'molecular matchmaker', a protein that promotes the formation of a stable complex between two or more DNA-binding proteins in an ATP-dependent manner without itself being part of a final effector complex. The protein is DNA mismatch repair protein MutL of Lactiplantibacillus plantarum (strain ATCC BAA-793 / NCIMB 8826 / WCFS1) (Lactobacillus plantarum).